A 248-amino-acid polypeptide reads, in one-letter code: Sulfur carrier protein FdhD (248 aa).

Cys-99 serves as the catalytic Cysteine persulfide intermediate. Position 232 to 237 (232 to 237 (FVRGKR)) interacts with Mo-bis(molybdopterin guanine dinucleotide).

The protein belongs to the FdhD family.

It localises to the cytoplasm. Functionally, required for formate dehydrogenase (FDH) activity. Acts as a sulfur carrier protein that transfers sulfur from IscS to the molybdenum cofactor prior to its insertion into FDH. The polypeptide is Sulfur carrier protein FdhD (Methanothermobacter thermautotrophicus (strain ATCC 29096 / DSM 1053 / JCM 10044 / NBRC 100330 / Delta H) (Methanobacterium thermoautotrophicum)).